Here is a 202-residue protein sequence, read N- to C-terminus: Small ribosomal subunit protein uS2 (202 aa).

It belongs to the universal ribosomal protein uS2 family.

This is Small ribosomal subunit protein uS2 (rps2) from Pyrococcus abyssi (strain GE5 / Orsay).